An 89-amino-acid polypeptide reads, in one-letter code: Small ribosomal subunit protein uS15 (89 aa).

It belongs to the universal ribosomal protein uS15 family. Part of the 30S ribosomal subunit. Forms a bridge to the 50S subunit in the 70S ribosome, contacting the 23S rRNA.

Its function is as follows. One of the primary rRNA binding proteins, it binds directly to 16S rRNA where it helps nucleate assembly of the platform of the 30S subunit by binding and bridging several RNA helices of the 16S rRNA. Forms an intersubunit bridge (bridge B4) with the 23S rRNA of the 50S subunit in the ribosome. This Geobacillus thermodenitrificans (strain NG80-2) protein is Small ribosomal subunit protein uS15.